The primary structure comprises 151 residues: S-ribosylhomocysteine lyase (151 aa).

Residues histidine 54, histidine 58, and cysteine 121 each contribute to the Fe cation site.

It belongs to the LuxS family. Homodimer. It depends on Fe cation as a cofactor.

The enzyme catalyses S-(5-deoxy-D-ribos-5-yl)-L-homocysteine = (S)-4,5-dihydroxypentane-2,3-dione + L-homocysteine. Involved in the synthesis of autoinducer 2 (AI-2) which is secreted by bacteria and is used to communicate both the cell density and the metabolic potential of the environment. The regulation of gene expression in response to changes in cell density is called quorum sensing. Catalyzes the transformation of S-ribosylhomocysteine (RHC) to homocysteine (HC) and 4,5-dihydroxy-2,3-pentadione (DPD). In Clostridium perfringens (strain ATCC 13124 / DSM 756 / JCM 1290 / NCIMB 6125 / NCTC 8237 / Type A), this protein is S-ribosylhomocysteine lyase.